The primary structure comprises 338 residues: Glyceraldehyde-3-phosphate dehydrogenase (338 aa).

Residues 11–12 and glycine 109 contribute to the NAD(+) site; that span reads TI. 138 to 140 is a binding site for D-glyceraldehyde 3-phosphate; it reads SCN. The active-site Nucleophile is the cysteine 139. Residue arginine 167 coordinates NAD(+). Residues threonine 169 and 192-193 each bind D-glyceraldehyde 3-phosphate; that span reads HA. Glutamine 299 lines the NAD(+) pocket.

It belongs to the glyceraldehyde-3-phosphate dehydrogenase family. As to quaternary structure, homotetramer.

The protein resides in the cytoplasm. It carries out the reaction D-glyceraldehyde 3-phosphate + phosphate + NADP(+) = (2R)-3-phospho-glyceroyl phosphate + NADPH + H(+). The catalysed reaction is D-glyceraldehyde 3-phosphate + phosphate + NAD(+) = (2R)-3-phospho-glyceroyl phosphate + NADH + H(+). It participates in carbohydrate degradation; glycolysis; pyruvate from D-glyceraldehyde 3-phosphate: step 1/5. In Thermoplasma volcanium (strain ATCC 51530 / DSM 4299 / JCM 9571 / NBRC 15438 / GSS1), this protein is Glyceraldehyde-3-phosphate dehydrogenase.